The primary structure comprises 217 residues: GTP cyclohydrolase 1 (217 aa).

Residues Cys109, His112, and Cys180 each contribute to the Zn(2+) site.

This sequence belongs to the GTP cyclohydrolase I family. Toroid-shaped homodecamer, composed of two pentamers of five dimers.

It carries out the reaction GTP + H2O = 7,8-dihydroneopterin 3'-triphosphate + formate + H(+). It functions in the pathway cofactor biosynthesis; 7,8-dihydroneopterin triphosphate biosynthesis; 7,8-dihydroneopterin triphosphate from GTP: step 1/1. In Aliivibrio fischeri (strain ATCC 700601 / ES114) (Vibrio fischeri), this protein is GTP cyclohydrolase 1.